Reading from the N-terminus, the 590-residue chain is Protein phosphatase PP2A regulatory subunit A (590 aa).

HEAT repeat units follow at residues 12-50 (PIAVLIDELKHDEITYRLNALERLSTIALALGPERTRDE), 89-127 (LLSPLENLAATEETVVRDKAVDSLNKVCICLSQEQLEQY), 206-244 (FIPLFNSLSNDDQDSVRLLSFDIMVSLAEVLKSDSEIRH), 246-284 (LLQPLRSFVSDSSWRTRYMVAANFVKLAKVVGPSLIKDE), 285-323 (LIKPFVLLMKDTEQEVRRAIATQIPGFCELLDKRIVLEE), 324-362 (IIPVIQELINDPAQHVRAALGMNIGALAPQLGKEKTTEY), 363-401 (LLPMFLELLKDENPEVRLNIISKLEVVNKVVGIELLSQS), 402-440 (LLPAIVTLAEDKQWRVRLAIIDYIPLLAQQLGVEFFNEK), 480-518 (IIPKFLAMRSHPNYLYRMTTIFAISEIAPALNAEVIEKQ), 519-551 (ILPTLEQLVNDPIPNIRFNVAKAFEVLKPVLAA), and 562-590 (IIPLLEQLTKDNDPDVQYFATQALEQTND).

Belongs to the phosphatase 2A regulatory subunit A family. As to quaternary structure, PP2A exists in several trimeric forms, all of which consist of a core composed of a catalytic subunit associated with a 65 kDa (PR65) (Subunit A) and a 55 kDa (PR55) (Subunit B) regulatory subunit.

Its function is as follows. Phosphatase 2A affects a variety of biological processes in the cell such as transcription, cell cycle progression and cellular morphogenesis, and provides an initial identification of critical substrates for this phosphatase. The regulatory subunit may direct the catalytic subunit to distinct, albeit overlapping, subsets of substrates. The sequence is that of Protein phosphatase PP2A regulatory subunit A (paa1) from Schizosaccharomyces pombe (strain 972 / ATCC 24843) (Fission yeast).